Consider the following 138-residue polypeptide: ATP synthase epsilon chain (138 aa).

It belongs to the ATPase epsilon chain family. In terms of assembly, F-type ATPases have 2 components, CF(1) - the catalytic core - and CF(0) - the membrane proton channel. CF(1) has five subunits: alpha(3), beta(3), gamma(1), delta(1), epsilon(1). CF(0) has three main subunits: a, b and c.

Its subcellular location is the cellular thylakoid membrane. Produces ATP from ADP in the presence of a proton gradient across the membrane. In Microcystis aeruginosa (strain NIES-843 / IAM M-2473), this protein is ATP synthase epsilon chain.